Reading from the N-terminus, the 1047-residue chain is Ras GTPase-activating protein 1 (1047 aa).

Met-1 is modified (N-acetylmethionine). One can recognise an SH2 1 domain in the interval 181–272 (WYHGKLDRTI…LKGEKLLYPV (92 aa)). The region spanning 279–341 (EDRRRVRAIL…VEDLVEEVGR (63 aa)) is the SH3 domain. The SH2 2 domain occupies 351–441 (WFHGKISKQE…VEGYYLKEPV (91 aa)). The PH domain occupies 474 to 577 (NIVKKGYLLK…WMKGLQAFCN (104 aa)). Residues 577–690 (NLRKSSPGTS…QKGHATDEWF (114 aa)) form the C2 domain. Residue Tyr-615 is modified to Phosphotyrosine. Positions 764 to 974 (KLESLLLCTL…HRMIMFLDEL (211 aa)) constitute a Ras-GAP domain. Ser-831 carries the post-translational modification Phosphoserine.

Interacts with SQSTM1. Interacts with SPSB1; the interaction does not promote degradation. Interacts with CAV2 (tyrosine phosphorylated form). Directly interacts with NCK1. Interacts with PDGFRB (tyrosine phosphorylated). Interacts (via SH2 domain) with the 'Tyr-9' phosphorylated form of PDPK1. Interacts with tyrosine-phosphorylated EPHB4. Post-translationally, the N-terminus is blocked. Phosphorylated by SRC and LCK. The phosphorylation SRC inhibits its ability to stimulate the Ras-GTPase activity, whereas phosphorylation by LCK does not display any effect on stimulation activity. As to expression, in placental villi, detected only in the trophoblast layer (cytotrophoblast and syncytiotrophoblast). Not detected in stromal, endothelial or Hofbauer cells (at protein level).

The protein localises to the cytoplasm. In terms of biological role, inhibitory regulator of the Ras-cyclic AMP pathway. Stimulates the GTPase of normal but not oncogenic Ras p21; this stimulation may be further increased in the presence of NCK1. In Homo sapiens (Human), this protein is Ras GTPase-activating protein 1 (RASA1).